A 311-amino-acid chain; its full sequence is Energy-coupling factor transporter ATP-binding protein EcfA2 (311 aa).

An ABC transporter domain is found at 3–265 (IKLKDVKFTF…IAFLEENNLQ (263 aa)). 40 to 47 (GQTGSGKT) provides a ligand contact to ATP.

This sequence belongs to the ABC transporter superfamily. Energy-coupling factor EcfA family. In terms of assembly, forms a stable energy-coupling factor (ECF) transporter complex composed of 2 membrane-embedded substrate-binding proteins (S component), 2 ATP-binding proteins (A component) and 2 transmembrane proteins (T component).

The protein resides in the cell membrane. Functionally, ATP-binding (A) component of a common energy-coupling factor (ECF) ABC-transporter complex. Unlike classic ABC transporters this ECF transporter provides the energy necessary to transport a number of different substrates. The sequence is that of Energy-coupling factor transporter ATP-binding protein EcfA2 from Mycoplasmopsis synoviae (strain 53) (Mycoplasma synoviae).